The sequence spans 280 residues: UPF0494 membrane protein C750.06c (280 aa).

4 helical membrane-spanning segments follow: residues 107–127 (WPLL…KFEV), 144–164 (IWVP…SLIF), 178–198 (VIIA…GMII), and 199–219 (AALG…LYFG).

This sequence belongs to the UPF0494 family.

The protein localises to the cytoplasm. It localises to the vacuole. Its subcellular location is the membrane. The protein is UPF0494 membrane protein C750.06c of Schizosaccharomyces pombe (strain 972 / ATCC 24843) (Fission yeast).